Reading from the N-terminus, the 201-residue chain is Imidazole glycerol phosphate synthase subunit HisH (201 aa).

Residues 1–201 (MVFIADYGAG…LQVLRNFAEC (201 aa)) enclose the Glutamine amidotransferase type-1 domain. Cys79 (nucleophile) is an active-site residue. Residues His183 and Glu185 contribute to the active site.

Heterodimer of HisH and HisF.

It localises to the cytoplasm. The enzyme catalyses 5-[(5-phospho-1-deoxy-D-ribulos-1-ylimino)methylamino]-1-(5-phospho-beta-D-ribosyl)imidazole-4-carboxamide + L-glutamine = D-erythro-1-(imidazol-4-yl)glycerol 3-phosphate + 5-amino-1-(5-phospho-beta-D-ribosyl)imidazole-4-carboxamide + L-glutamate + H(+). It catalyses the reaction L-glutamine + H2O = L-glutamate + NH4(+). It participates in amino-acid biosynthesis; L-histidine biosynthesis; L-histidine from 5-phospho-alpha-D-ribose 1-diphosphate: step 5/9. IGPS catalyzes the conversion of PRFAR and glutamine to IGP, AICAR and glutamate. The HisH subunit catalyzes the hydrolysis of glutamine to glutamate and ammonia as part of the synthesis of IGP and AICAR. The resulting ammonia molecule is channeled to the active site of HisF. The polypeptide is Imidazole glycerol phosphate synthase subunit HisH (Chlorobium luteolum (strain DSM 273 / BCRC 81028 / 2530) (Pelodictyon luteolum)).